The following is a 160-amino-acid chain: Cyclic pyranopterin monophosphate synthase (160 aa).

Substrate-binding positions include 77–79 and 114–115; these read MCH and ME. The active site involves Asp-129.

The protein belongs to the MoaC family. In terms of assembly, homohexamer; trimer of dimers.

It catalyses the reaction (8S)-3',8-cyclo-7,8-dihydroguanosine 5'-triphosphate = cyclic pyranopterin phosphate + diphosphate. Its pathway is cofactor biosynthesis; molybdopterin biosynthesis. Catalyzes the conversion of (8S)-3',8-cyclo-7,8-dihydroguanosine 5'-triphosphate to cyclic pyranopterin monophosphate (cPMP). The polypeptide is Cyclic pyranopterin monophosphate synthase (Listeria innocua serovar 6a (strain ATCC BAA-680 / CLIP 11262)).